A 161-amino-acid chain; its full sequence is Phosphopantetheine adenylyltransferase (161 aa).

Substrate is bound at residue Thr-9. ATP-binding positions include 9–10 (TF) and His-17. Positions 41, 73, and 87 each coordinate substrate. Residues 88-90 (GLR), Glu-98, and 123-129 (YQFISGT) contribute to the ATP site.

The protein belongs to the bacterial CoaD family. In terms of assembly, homohexamer. Mg(2+) serves as cofactor.

Its subcellular location is the cytoplasm. It carries out the reaction (R)-4'-phosphopantetheine + ATP + H(+) = 3'-dephospho-CoA + diphosphate. It functions in the pathway cofactor biosynthesis; coenzyme A biosynthesis; CoA from (R)-pantothenate: step 4/5. Functionally, reversibly transfers an adenylyl group from ATP to 4'-phosphopantetheine, yielding dephospho-CoA (dPCoA) and pyrophosphate. This chain is Phosphopantetheine adenylyltransferase, found in Cupriavidus pinatubonensis (strain JMP 134 / LMG 1197) (Cupriavidus necator (strain JMP 134)).